The primary structure comprises 82 residues: Sec-independent protein translocase protein TatA (82 aa).

A helical transmembrane segment spans residues 1 to 21 (MGGISIWQLLIIAVIIVLLFG). Residues 48–82 (SAKDAKKDADFVPQNLEKKEAETVEKQKQNDKEQA) form a disordered region.

Belongs to the TatA/E family. The Tat system comprises two distinct complexes: a TatABC complex, containing multiple copies of TatA, TatB and TatC subunits, and a separate TatA complex, containing only TatA subunits. Substrates initially bind to the TatABC complex, which probably triggers association of the separate TatA complex to form the active translocon.

It is found in the cell inner membrane. Its function is as follows. Part of the twin-arginine translocation (Tat) system that transports large folded proteins containing a characteristic twin-arginine motif in their signal peptide across membranes. TatA could form the protein-conducting channel of the Tat system. The chain is Sec-independent protein translocase protein TatA from Aliivibrio salmonicida (strain LFI1238) (Vibrio salmonicida (strain LFI1238)).